Here is a 134-residue protein sequence, read N- to C-terminus: Aspartate 1-decarboxylase (134 aa).

Residue serine 25 is the Schiff-base intermediate with substrate; via pyruvic acid of the active site. Pyruvic acid (Ser) is present on serine 25. A substrate-binding site is contributed by threonine 57. The Proton donor role is filled by tyrosine 58. Residue 73–75 (GAA) participates in substrate binding.

It belongs to the PanD family. In terms of assembly, heterooctamer of four alpha and four beta subunits. The cofactor is pyruvate. Is synthesized initially as an inactive proenzyme, which is activated by self-cleavage at a specific serine bond to produce a beta-subunit with a hydroxyl group at its C-terminus and an alpha-subunit with a pyruvoyl group at its N-terminus.

The protein resides in the cytoplasm. It carries out the reaction L-aspartate + H(+) = beta-alanine + CO2. It functions in the pathway cofactor biosynthesis; (R)-pantothenate biosynthesis; beta-alanine from L-aspartate: step 1/1. Functionally, catalyzes the pyruvoyl-dependent decarboxylation of aspartate to produce beta-alanine. The sequence is that of Aspartate 1-decarboxylase from Geobacter sp. (strain M21).